A 728-amino-acid polypeptide reads, in one-letter code: MSTEAKCPVTGGATRSSSAGIQSNADWWPNQINLGMLHQHSALSNPMDPDFDYAAEFKTLDLDAVIADLKALMTDSQDWWPADFGHYGPLFVRMAWHAAGTYRIGDGRGGAGAGQQRFAPLNSWPDNANLDKARRLLWPVKQKYGRKISWADLMVLAGNVALESMGFKTFGFGAGRVDTWEPDQGIYWGPETTWLDDKRYSGDRDLENPLAAVQMGLIYVNPEGPNGKPDPVAAARDIRETFARMAMNDEETVALIAGGHTFGKTHGAGDAALVGPEPEAAPIEQQGLGWISSYGTGKGSDAITGGPEVTWTQTPTQWSNFYFDNLFNYEWELTKSPAGAWQWVAKDAGDVIPDAFDAAKKHRPTMLTTDLSMRMDPAYEKISRRFHQNPDEFADAFARAWFKLTHRDMGPVSRYLGKLVPAEHLIWQDPVPAVDHKLIDAADIAALKAKLLATGIAPTRLALTAWASAATFRGSDKRGGANGARIRLAPQKDWAANEPAELAKVLAALEKVQAEFNAAATGGKKVSLADLIVLGGCAAIEAAAKAAGHDVTVPFTPGRTDATEAQTDVASFAVLEPKADGFRNYLGKGDPRAPEEQLIDRAQLMTLTAPEMTALIGGMRALGANVGGAKHGVFTTRPGALTNDFFVNLLDMNMSWHPAAEPGVYELRDRKSGAVKWTATRVDLVFGSNSQLRALAEVYGTQDGEAAFVKDFVAAWTKVMELDRFDLA.

Positions 1-19 are cleaved as a signal peptide; sequence MSTEAKCPVTGGATRSSSA. The segment at 1–20 is disordered; that stretch reads MSTEAKCPVTGGATRSSSAG. A cross-link (tryptophyl-tyrosyl-methioninium (Trp-Tyr) (with M-245)) is located at residues 96–219; sequence WHAAGTYRIG…LAAVQMGLIY (124 aa). His97 (proton acceptor) is an active-site residue. A cross-link (tryptophyl-tyrosyl-methioninium (Tyr-Met) (with W-96)) is located at residues 219–245; the sequence is YVNPEGPNGKPDPVAAARDIRETFARM. His260 provides a ligand contact to heme b.

Belongs to the peroxidase family. Peroxidase/catalase subfamily. As to quaternary structure, homodimer or homotetramer. It depends on heme b as a cofactor. Post-translationally, formation of the three residue Trp-Tyr-Met cross-link is important for the catalase, but not the peroxidase activity of the enzyme.

The enzyme catalyses H2O2 + AH2 = A + 2 H2O. The catalysed reaction is 2 H2O2 = O2 + 2 H2O. In terms of biological role, bifunctional enzyme with both catalase and broad-spectrum peroxidase activity. The protein is Catalase-peroxidase of Acidiphilium cryptum (strain JF-5).